A 513-amino-acid polypeptide reads, in one-letter code: ATP synthase subunit alpha 1 (513 aa).

ATP is bound at residue 169–176 (GDRQCGKT).

This sequence belongs to the ATPase alpha/beta chains family. F-type ATPases have 2 components, CF(1) - the catalytic core - and CF(0) - the membrane proton channel. CF(1) has five subunits: alpha(3), beta(3), gamma(1), delta(1), epsilon(1). CF(0) has three main subunits: a(1), b(2) and c(9-12). The alpha and beta chains form an alternating ring which encloses part of the gamma chain. CF(1) is attached to CF(0) by a central stalk formed by the gamma and epsilon chains, while a peripheral stalk is formed by the delta and b chains.

The protein resides in the cell inner membrane. The enzyme catalyses ATP + H2O + 4 H(+)(in) = ADP + phosphate + 5 H(+)(out). Produces ATP from ADP in the presence of a proton gradient across the membrane. The alpha chain is a regulatory subunit. This chain is ATP synthase subunit alpha 1, found in Burkholderia thailandensis (strain ATCC 700388 / DSM 13276 / CCUG 48851 / CIP 106301 / E264).